Consider the following 354-residue polypeptide: 3-dehydroquinate synthase (354 aa).

Residues 100-104, 124-125, lysine 136, lysine 145, and 163-166 contribute to the NAD(+) site; these read GATGD, TT, and FLKT. Glutamate 178, histidine 242, and histidine 256 together coordinate Zn(2+).

It belongs to the sugar phosphate cyclases superfamily. Dehydroquinate synthase family. Requires Co(2+) as cofactor. Zn(2+) serves as cofactor. It depends on NAD(+) as a cofactor.

The protein localises to the cytoplasm. The enzyme catalyses 7-phospho-2-dehydro-3-deoxy-D-arabino-heptonate = 3-dehydroquinate + phosphate. The protein operates within metabolic intermediate biosynthesis; chorismate biosynthesis; chorismate from D-erythrose 4-phosphate and phosphoenolpyruvate: step 2/7. In terms of biological role, catalyzes the conversion of 3-deoxy-D-arabino-heptulosonate 7-phosphate (DAHP) to dehydroquinate (DHQ). The chain is 3-dehydroquinate synthase from Staphylococcus aureus (strain NCTC 8325 / PS 47).